Consider the following 158-residue polypeptide: uncharacterized protein (158 aa).

The FPG-type zinc-finger motif lies at 109–143; the sequence is RVHARTGLPCPVCGDTVREVSFADKSFQYCPTCQT.

This is an uncharacterized protein from Mycobacterium tuberculosis (strain ATCC 25618 / H37Rv).